Reading from the N-terminus, the 343-residue chain is N-acetyl-gamma-glutamyl-phosphate reductase (343 aa).

Cysteine 150 is an active-site residue.

It belongs to the NAGSA dehydrogenase family. Type 1 subfamily.

It is found in the cytoplasm. It carries out the reaction N-acetyl-L-glutamate 5-semialdehyde + phosphate + NADP(+) = N-acetyl-L-glutamyl 5-phosphate + NADPH + H(+). Its pathway is amino-acid biosynthesis; L-arginine biosynthesis; N(2)-acetyl-L-ornithine from L-glutamate: step 3/4. Its function is as follows. Catalyzes the NADPH-dependent reduction of N-acetyl-5-glutamyl phosphate to yield N-acetyl-L-glutamate 5-semialdehyde. This chain is N-acetyl-gamma-glutamyl-phosphate reductase, found in Nitrosococcus oceani (strain ATCC 19707 / BCRC 17464 / JCM 30415 / NCIMB 11848 / C-107).